An 881-amino-acid chain; its full sequence is Nitrate reductase [NADH] 1 (881 aa).

The segment at 1-46 (MAASVEHRPFTSHQHGVVRSFKSYPDVPRPKKLPLPQPLSDSTNDN) is disordered. A Mo-molybdopterin-binding site is contributed by cysteine 167. A Cytochrome b5 heme-binding domain is found at 515-590 (TKSYSLSEVR…LEDYRIGELM (76 aa)). Heme is bound by residues histidine 550 and histidine 573. The 113-residue stretch at 625 to 737 (REKIPCKLLS…KGPLGHIEYT (113 aa)) folds into the FAD-binding FR-type domain. Residues 677 to 680 (RAYT), 694 to 698 (VVKVY), phenylalanine 699, phenylalanine 706, 711 to 713 (IMS), and threonine 764 contribute to the FAD site.

The protein belongs to the nitrate reductase family. As to quaternary structure, homodimer. It depends on FAD as a cofactor. Heme serves as cofactor. The cofactor is Mo-molybdopterin.

The enzyme catalyses nitrite + NAD(+) + H2O = nitrate + NADH + H(+). In terms of biological role, nitrate reductase is a key enzyme involved in the first step of nitrate assimilation in plants, fungi and bacteria. The polypeptide is Nitrate reductase [NADH] 1 (NIA1) (Phaseolus vulgaris (Kidney bean)).